Reading from the N-terminus, the 899-residue chain is Semaphorin-1A (899 aa).

A compositionally biased stretch (low complexity) spans 1–20; that stretch reads MLNSHNTNHNNNSASNSNYN. Residues 1-24 form a disordered region; sequence MLNSHNTNHNNNSASNSNYNKGHK. The Cytoplasmic segment spans residues 1–40; the sequence is MLNSHNTNHNNNSASNSNYNKGHKMHLKSATAKATIMKHK. The chain crosses the membrane as a helical span at residues 41–61; that stretch reads LSKFYGYGWMQVFLLLTVLVI. Residues 62-657 lie on the Extracellular side of the membrane; it reads GNQSAWQENI…INAQYTVETL (596 aa). N-linked (GlcNAc...) asparagine glycans are attached at residues Asn-63, Asn-90, and Asn-117. Residues 74-543 enclose the Sema domain; it reads KLYVELGPED…TDSQVVAIQL (470 aa). Cystine bridges form between Cys-141–Cys-151 and Cys-169–Cys-178. 3 N-linked (GlcNAc...) asparagine glycosylation sites follow: Asn-187, Asn-207, and Asn-311. 2 disulfides stabilise this stretch: Cys-288/Cys-402 and Cys-312/Cys-361. An N-linked (GlcNAc...) asparagine glycan is attached at Asn-404. A helical membrane pass occupies residues 658 to 678; it reads VMAVLAGSIFSLLVGFFTGYF. The Cytoplasmic segment spans residues 679–899; it reads CGRRCHKDED…PKNCSYIYRD (221 aa). Disordered regions lie at residues 735–766 and 798–899; these read VLLPQPPPPNKMHSPKNTLRKPPMHQMHQGPN and VMGD…IYRD. Polar residues predominate over residues 809 to 827; sequence FSTTRSVKKAVNNTNTRNR. Positions 828–837 are enriched in basic residues; it reads SLGRARRQPP. The span at 847 to 876 shows a compositional bias: low complexity; the sequence is SNSPQQQQQQSQQPHSSSGSSPVMSNSSSS.

It belongs to the semaphorin family. Expressed by subsets of neurons and muscles.

It localises to the cell membrane. Its function is as follows. Involved in growth cone guidance through its role in axonal repulsion. Function in neurons is essential for adult survival, motor neuron survival, and is important for climbing behavior and activity. The polypeptide is Semaphorin-1A (Drosophila melanogaster (Fruit fly)).